The following is a 375-amino-acid chain: Saccharopine dehydrogenase [NAD(+), L-lysine-forming] (375 aa).

L-saccharopine is bound by residues R18 and K78. K78 acts as the Proton acceptor in catalysis. The Proton donor role is filled by H96. An L-saccharopine-binding site is contributed by Q101. R130 lines the NAD(+) pocket. 2 residues coordinate L-saccharopine: R131 and F135. Residues 203–204 (GR), D227, T231, Y252, and V279 each bind NAD(+). The cysteines at positions 205 and 250 are disulfide-linked. 280 to 282 (SAD) is a binding site for L-saccharopine. 322–325 (IDHL) provides a ligand contact to NAD(+).

The protein belongs to the AlaDH/PNT family. As to quaternary structure, monomer.

It carries out the reaction L-saccharopine + NAD(+) + H2O = L-lysine + 2-oxoglutarate + NADH + H(+). It functions in the pathway amino-acid biosynthesis; L-lysine biosynthesis via AAA pathway; L-lysine from L-alpha-aminoadipate (fungal route): step 3/3. Functionally, catalyzes the NAD(+)-dependent cleavage of saccharopine to L-lysine and 2-oxoglutarate, the final step in the alpha-aminoadipate (AAA) pathway for lysin biosynthesis. This is Saccharopine dehydrogenase [NAD(+), L-lysine-forming] from Emericella nidulans (strain FGSC A4 / ATCC 38163 / CBS 112.46 / NRRL 194 / M139) (Aspergillus nidulans).